The primary structure comprises 505 residues: Alkylglycerol monooxygenase (505 aa).

The next 2 helical transmembrane spans lie at 56–76 (VSAW…ISGH) and 104–124 (AVAI…ELPW). The Fatty acid hydroxylase domain occupies 130–262 (WIFCLFFQDF…FIIWDKMFNT (133 aa)). The short motif at 145 to 149 (HRAVH) is the Histidine box-1 element. A Histidine box-2 motif is present at residues 158-162 (HTIHH). The short motif at 234–238 (HRVHH) is the Histidine box-3 element. The next 4 helical transmembrane spans lie at 366–386 (ILVK…FFHF), 396–416 (LDCT…GAFF), 430–450 (CCGV…AGTH), and 452–472 (LFVI…VLVE).

The protein belongs to the sterol desaturase family. TMEM195 subfamily. Requires Fe cation as cofactor.

Its subcellular location is the endoplasmic reticulum membrane. It carries out the reaction 1-O-(1,2-saturated-alkyl)-sn-glycerol + (6R)-L-erythro-5,6,7,8-tetrahydrobiopterin + O2 = a 1-(1-hydroxyalkyl)-sn-glycerol + (6R)-L-erythro-6,7-dihydrobiopterin + H2O. Its function is as follows. Glyceryl-ether monooxygenase that cleaves the O-alkyl bond of ether lipids. The chain is Alkylglycerol monooxygenase from Caenorhabditis elegans.